Consider the following 291-residue polypeptide: Sulfate transport system permease protein CysW (291 aa).

At 1 to 22 the chain is on the cytoplasmic side; sequence MAEVTQLKRYDARPINWGKWFL. Residues 23–43 traverse the membrane as a helical segment; it reads IGIGMLVSAFILLVPMIYIFV. Residues 44-69 are Periplasmic-facing; it reads QAFSKGLMPVLQNLADPDMLHAIWLT. The region spanning 66-270 is the ABC transmembrane type-1 domain; sequence IWLTVMIALI…MAIITLFLKS (205 aa). A helical membrane pass occupies residues 70–90; sequence VMIALIAVPVNLVFGILLAWL. Residues 91–104 lie on the Cytoplasmic side of the membrane; it reads VTRFNFPGRQLLLT. The chain crosses the membrane as a helical span at residues 105–125; the sequence is LLDIPFAVSPVVAGLVYLLFY. Over 126-141 the chain is Periplasmic; the sequence is GSNGPLGGWLDEHNLQ. A helical membrane pass occupies residues 142–162; that stretch reads IMFSWPGMVLVTIFVTCPFVV. Residues 163 to 200 lie on the Cytoplasmic side of the membrane; sequence RELVPVMLSQGSQEDEAAILLGASGWQMFRRVTLPNIR. The helical transmembrane segment at 201–221 threads the bilayer; it reads WALLYGVVLTNARAIGEFGAV. The Periplasmic portion of the chain corresponds to 222–247; that stretch reads SVVSGSIRGETLSLPLQIELLEQDYN. The chain crosses the membrane as a helical span at residues 248–268; it reads TVGSFTAAALLTLMAIITLFL. Topologically, residues 269 to 291 are cytoplasmic; that stretch reads KSMLQWRLENQEKRAQQEEHHEH.

This sequence belongs to the binding-protein-dependent transport system permease family. CysTW subfamily. The complex is composed of two ATP-binding proteins (CysA), two transmembrane proteins (CysT and CysW) and a solute-binding protein (CysP).

It localises to the cell inner membrane. In terms of biological role, part of the ABC transporter complex CysAWTP (TC 3.A.1.6.1) involved in sulfate/thiosulfate import. Probably responsible for the translocation of the substrate across the membrane. This Escherichia coli O6:H1 (strain CFT073 / ATCC 700928 / UPEC) protein is Sulfate transport system permease protein CysW (cysW).